A 92-amino-acid polypeptide reads, in one-letter code: Major allergen I polypeptide chain 1 (92 aa).

A signal peptide spans 1–22 (MKGACVLVLLWAALLLISGGNC).

Belongs to the secretoglobin family. Heterotetramer composed of two non-covalently linked disulfide-linked heterodimer of chains 1 and 2. Saliva and sebaceous glands.

The protein localises to the secreted. The sequence is that of Major allergen I polypeptide chain 1 (CH1) from Felis catus (Cat).